A 301-amino-acid polypeptide reads, in one-letter code: Acetylglutamate kinase (301 aa).

Substrate is bound by residues 64–65, arginine 86, and asparagine 181; that span reads GG.

The protein belongs to the acetylglutamate kinase family. ArgB subfamily.

It is found in the cytoplasm. It carries out the reaction N-acetyl-L-glutamate + ATP = N-acetyl-L-glutamyl 5-phosphate + ADP. Its pathway is amino-acid biosynthesis; L-arginine biosynthesis; N(2)-acetyl-L-ornithine from L-glutamate: step 2/4. In terms of biological role, catalyzes the ATP-dependent phosphorylation of N-acetyl-L-glutamate. In Aliarcobacter butzleri (strain RM4018) (Arcobacter butzleri), this protein is Acetylglutamate kinase.